Reading from the N-terminus, the 185-residue chain is Peptide deformylase (185 aa).

Cys-94 and His-136 together coordinate Fe cation. Residue Glu-137 is part of the active site. His-140 is a Fe cation binding site.

Belongs to the polypeptide deformylase family. It depends on Fe(2+) as a cofactor.

It carries out the reaction N-terminal N-formyl-L-methionyl-[peptide] + H2O = N-terminal L-methionyl-[peptide] + formate. Removes the formyl group from the N-terminal Met of newly synthesized proteins. Requires at least a dipeptide for an efficient rate of reaction. N-terminal L-methionine is a prerequisite for activity but the enzyme has broad specificity at other positions. The sequence is that of Peptide deformylase from Chlorobium phaeobacteroides (strain BS1).